A 92-amino-acid chain; its full sequence is Small ribosomal subunit protein uS19 (92 aa).

It belongs to the universal ribosomal protein uS19 family.

In terms of biological role, protein S19 forms a complex with S13 that binds strongly to the 16S ribosomal RNA. This chain is Small ribosomal subunit protein uS19, found in Mycoplasmopsis synoviae (strain 53) (Mycoplasma synoviae).